We begin with the raw amino-acid sequence, 288 residues long: Pantothenate synthetase (288 aa).

30–37 (MGNLHNGH) is a binding site for ATP. The active-site Proton donor is H37. Residue Q61 participates in (R)-pantoate binding. A beta-alanine-binding site is contributed by Q61. 149 to 152 (GQKD) is an ATP binding site. Q155 is a binding site for (R)-pantoate. Residues V178 and 186 to 189 (LSSR) each bind ATP.

The protein belongs to the pantothenate synthetase family. As to quaternary structure, homodimer.

It localises to the cytoplasm. It carries out the reaction (R)-pantoate + beta-alanine + ATP = (R)-pantothenate + AMP + diphosphate + H(+). Its pathway is cofactor biosynthesis; (R)-pantothenate biosynthesis; (R)-pantothenate from (R)-pantoate and beta-alanine: step 1/1. In terms of biological role, catalyzes the condensation of pantoate with beta-alanine in an ATP-dependent reaction via a pantoyl-adenylate intermediate. The sequence is that of Pantothenate synthetase from Tolumonas auensis (strain DSM 9187 / NBRC 110442 / TA 4).